The chain runs to 190 residues: Inosine triphosphate pyrophosphatase (190 aa).

Position 10-15 (10-15 (TGNAKK)) interacts with ITP. Position 40 (Glu40) interacts with Mg(2+). Residues Lys52, 68-69 (DT), Lys85, 144-147 (FGWD), Lys167, and 172-173 (HR) each bind ITP.

It belongs to the HAM1 NTPase family. As to quaternary structure, homodimer. It depends on Mg(2+) as a cofactor. Mn(2+) is required as a cofactor.

Its subcellular location is the cytoplasm. It catalyses the reaction ITP + H2O = IMP + diphosphate + H(+). The enzyme catalyses dITP + H2O = dIMP + diphosphate + H(+). It carries out the reaction XTP + H2O = XMP + diphosphate + H(+). Pyrophosphatase that hydrolyzes non-canonical purine nucleotides such as inosine triphosphate (ITP), deoxyinosine triphosphate (dITP) or xanthosine 5'-triphosphate (XTP) to their respective monophosphate derivatives. The enzyme does not distinguish between the deoxy- and ribose forms. Probably excludes non-canonical purines from RNA and DNA precursor pools, thus preventing their incorporation into RNA and DNA and avoiding chromosomal lesions. This Culex quinquefasciatus (Southern house mosquito) protein is Inosine triphosphate pyrophosphatase.